The following is a 341-amino-acid chain: Methionine import ATP-binding protein MetN 1 (341 aa).

The region spanning 2-241 (IEFRQVSKTF…PKTTIAQNFV (240 aa)) is the ABC transporter domain. 38-45 (GYSGAGKS) lines the ATP pocket.

Belongs to the ABC transporter superfamily. Methionine importer (TC 3.A.1.24) family. In terms of assembly, the complex is composed of two ATP-binding proteins (MetN), two transmembrane proteins (MetI) and a solute-binding protein (MetQ).

It is found in the cell membrane. The catalysed reaction is L-methionine(out) + ATP + H2O = L-methionine(in) + ADP + phosphate + H(+). It catalyses the reaction D-methionine(out) + ATP + H2O = D-methionine(in) + ADP + phosphate + H(+). Part of the ABC transporter complex MetNIQ involved in methionine import. Responsible for energy coupling to the transport system. The protein is Methionine import ATP-binding protein MetN 1 of Staphylococcus aureus (strain MW2).